The sequence spans 148 residues: Aspartate carbamoyltransferase regulatory chain (148 aa).

Zn(2+) is bound by residues cysteine 106, cysteine 111, cysteine 134, and cysteine 137.

It belongs to the PyrI family. Contains catalytic and regulatory chains. Zn(2+) is required as a cofactor.

Functionally, involved in allosteric regulation of aspartate carbamoyltransferase. This chain is Aspartate carbamoyltransferase regulatory chain, found in Methanococcus maripaludis (strain C6 / ATCC BAA-1332).